The primary structure comprises 149 residues: MVFLSLSRWVRSRGPDRYWRVQEVLKHARHFRGRKNRCFSLAVRAVRRAFVYSTKARKAKKRIMRALWVSRIAGATREHGMKYPMLMSNLVKCQVALNRKVISDMSIYEPKTFKSLAALAKRRRDEGILAALGDGKEPEGIFSRVVNYH.

The N-terminal 9 residues, 1-9 (MVFLSLSRW), are a transit peptide targeting the mitochondrion.

Belongs to the bacterial ribosomal protein bL20 family. As to quaternary structure, component of the mitochondrial ribosome large subunit (39S) which comprises a 16S rRNA and about 50 distinct proteins.

Its subcellular location is the mitochondrion. In Xenopus laevis (African clawed frog), this protein is Large ribosomal subunit protein bL20m (mrpl20).